The chain runs to 419 residues: Subtilisin-like protease 2 (419 aa).

The first 16 residues, 1 to 16 (MQLLNFGLLLLPFVAG), serve as a signal peptide directing secretion. A propeptide spanning residues 17-122 (DLAPQPEPLL…VHPDQHVYLA (106 aa)) is cleaved from the precursor. The 87-residue stretch at 36–122 (QYIVTLKEGL…VHPDQHVYLA (87 aa)) folds into the Inhibitor I9 domain. Residues 131-419 (RWGLGYMSSK…IQERKFKLPK (289 aa)) form the Peptidase S8 domain. Active-site charge relay system residues include Asp-169 and His-201. N-linked (GlcNAc...) asparagine glycosylation is found at Asn-248, Asn-261, and Asn-348. The active-site Charge relay system is Ser-357. Asn-388 carries an N-linked (GlcNAc...) asparagine glycan.

Belongs to the peptidase S8 family.

Its subcellular location is the secreted. Secreted subtilisin-like serine protease with keratinolytic activity that contributes to pathogenicity. This Arthroderma benhamiae (Trichophyton mentagrophytes) protein is Subtilisin-like protease 2 (SUB2).